The primary structure comprises 343 residues: Mas-related G-protein coupled receptor member F (343 aa).

Topologically, residues 1–44 (MAGNCSWEAHPGNRNKMCPGLSEAPELYSRGFLTIEQIAMLPPP) are extracellular. N-linked (GlcNAc...) asparagine glycosylation is present at asparagine 4. The chain crosses the membrane as a helical span at residues 45 to 66 (AVMNYIFLLLCLCGLVGNGLVL). The Cytoplasmic portion of the chain corresponds to 67–82 (WFFGFSIKRNPFSIYF). Residues 83–104 (LHLASADVGYLFSKAVFSILNT) form a helical membrane-spanning segment. At 105–123 (GGFLGTFADYIRSVCRVLG) the chain is on the extracellular side. A helical transmembrane segment spans residues 124–144 (LCMFLTGVSLLPAVSAERCAS). Over 145–160 (VIFPAWYWRRRPKRLS) the chain is Cytoplasmic. The helical transmembrane segment at 161–181 (AVVCALLWVLSLLVTCLHNYF) threads the bilayer. Residues 182–198 (CVFLGRGAPGAACRHMD) lie on the Extracellular side of the membrane. Residues 199–220 (IFLGILLFLLCCPLMVLPCLAL) form a helical membrane-spanning segment. At 221-241 (ILHVECRARRRQRSAKLNHVI) the chain is on the cytoplasmic side. A helical membrane pass occupies residues 242 to 263 (LAMVSVFLVSSIYLGIDWFLFW). Residues 264–273 (VFQIPAPFPE) are Extracellular-facing. Residues 274 to 294 (YVTDLCICINSSAKPIVYFLA) traverse the membrane as a helical segment. The Cytoplasmic portion of the chain corresponds to 295-343 (GRDKSQRLWEPLRVVFQRALRDGAELGEAGGSTPNTVTMEMQCPPGNAS). Residues 320–343 (LGEAGGSTPNTVTMEMQCPPGNAS) are disordered.

Belongs to the G-protein coupled receptor 1 family. Mas subfamily.

The protein resides in the cell membrane. Functionally, orphan receptor. May bind to a neuropeptide and may regulate nociceptor function and/or development, including the sensation or modulation of pain. The sequence is that of Mas-related G-protein coupled receptor member F (MRGPRF) from Homo sapiens (Human).